The chain runs to 1162 residues: Nucleoporin nup132 (1162 aa).

Belongs to the nucleoporin Nup133 family. In terms of assembly, component of the npc107-120 complex which consists of nup85, nup107, nup120, nup131, nup132 and seh1. Interacts with nup107.

It localises to the nucleus envelope. Its function is as follows. Functions as a component of the nuclear pore complex (NPC). NPC components, collectively referred to as nucleoporins (NUPs), can play the role of both NPC structural components and of docking or interaction partners for transiently associated nuclear transport factors. Active directional transport is assured by both, a Phe-Gly (FG) repeat affinity gradient for these transport factors across the NPC and a transport cofactor concentration gradient across the nuclear envelope. The sequence is that of Nucleoporin nup132 (nup132) from Schizosaccharomyces pombe (strain 972 / ATCC 24843) (Fission yeast).